The sequence spans 992 residues: Vacuolar membrane protease (992 aa).

Over 1–24 the chain is Cytoplasmic; that stretch reads MSPAMANPRVRKFNPIAFTPLPVT. The chain crosses the membrane as a helical span at residues 25-45; that stretch reads FITTIVYLAVLILVLVTYLVV. Topologically, residues 46-390 are vacuolar; sequence PPAPTLEMSP…SAFAVFRLHT (345 aa). N-linked (GlcNAc...) asparagine glycans are attached at residues asparagine 59, asparagine 115, and asparagine 118. Positions 174 and 186 each coordinate Zn(2+). Glutamate 220 functions as the Proton acceptor in the catalytic mechanism. A Zn(2+)-binding site is contributed by glutamate 221. A glycan (N-linked (GlcNAc...) asparagine) is linked at asparagine 237. Zn(2+)-binding residues include glutamate 246 and histidine 319. A helical membrane pass occupies residues 391–411; that stretch reads LFALSVTLLVIGPLVLFITSI. Topologically, residues 412 to 446 are cytoplasmic; sequence ALSKTDRMYLFSMSKSLGGASETVSLRGLRGLFRT. A helical membrane pass occupies residues 447–467; it reads PIILTVTTVIPIGLAYLLEKI. Over 468–474 the chain is Vacuolar; that stretch reads NPYIVHS. A helical membrane pass occupies residues 475–495; that stretch reads SQFAVWSMMLSVWIFVAWFLA. The Cytoplasmic portion of the chain corresponds to 496–508; it reads RVADFFRPSALHR. The helical transmembrane segment at 509–529 threads the bilayer; it reads AYSYTWIFIVTWIMLVISTVY. Over 530 to 533 the chain is Vacuolar; the sequence is ANQK. A helical transmembrane segment spans residues 534 to 554; sequence GIAAGYFTFFYFAAVFLATWV. Residues 555–671 are Cytoplasmic-facing; the sequence is SYLELFSLPR…WSWTLPRWTW (117 aa). The disordered stretch occupies residues 579–620; it reads RSSSLSSRLLTPSADELPSDIGPNGAENVGDPDETDPTESTS. The chain crosses the membrane as a helical span at residues 672 to 692; sequence ILQLLLLAPIVIILVGQVGLL. Over 693–708 the chain is Vacuolar; sequence LTTAMSQIGSDGVSTF. A helical transmembrane segment spans residues 709–729; it reads IVYLACALFSTLLFAPLLPFI. Topologically, residues 730 to 736 are cytoplasmic; sequence HRFTYHV. A helical membrane pass occupies residues 737–757; sequence PTFLLLIFIGTLIYNLVAFPF. Residues 758 to 992 lie on the Vacuolar side of the membrane; the sequence is SPANRLKIFF…VEASHDFIIQ (235 aa). N-linked (GlcNAc...) asparagine glycosylation is found at asparagine 805, asparagine 846, and asparagine 954.

The protein belongs to the peptidase M28 family. Requires Zn(2+) as cofactor.

It localises to the vacuole membrane. In terms of biological role, may be involved in vacuolar sorting and osmoregulation. This Paracoccidioides brasiliensis (strain Pb03) protein is Vacuolar membrane protease.